The following is a 317-amino-acid chain: Ribosomal protein L11 methyltransferase (317 aa).

The S-adenosyl-L-methionine site is built by Thr158, Gly179, Asp201, and Asn244.

Belongs to the methyltransferase superfamily. PrmA family.

Its subcellular location is the cytoplasm. It carries out the reaction L-lysyl-[protein] + 3 S-adenosyl-L-methionine = N(6),N(6),N(6)-trimethyl-L-lysyl-[protein] + 3 S-adenosyl-L-homocysteine + 3 H(+). Its function is as follows. Methylates ribosomal protein L11. The chain is Ribosomal protein L11 methyltransferase from Streptococcus thermophilus (strain CNRZ 1066).